A 244-amino-acid polypeptide reads, in one-letter code: tRNA (guanine-N(7)-)-methyltransferase (244 aa).

Residues 1 to 11 show a composition bias toward pro residues; it reads MTDTHVPPPEL. Residues 1-23 are disordered; it reads MTDTHVPPPELPAAEEGEERPHR. S-adenosyl-L-methionine is bound by residues glutamate 74, glutamate 99, aspartate 126, and aspartate 149. Aspartate 149 is a catalytic residue. Substrate is bound by residues lysine 153, aspartate 185, and 222–225; that span reads TKFE.

This sequence belongs to the class I-like SAM-binding methyltransferase superfamily. TrmB family.

It catalyses the reaction guanosine(46) in tRNA + S-adenosyl-L-methionine = N(7)-methylguanosine(46) in tRNA + S-adenosyl-L-homocysteine. It functions in the pathway tRNA modification; N(7)-methylguanine-tRNA biosynthesis. Functionally, catalyzes the formation of N(7)-methylguanine at position 46 (m7G46) in tRNA. This chain is tRNA (guanine-N(7)-)-methyltransferase, found in Pseudomonas syringae pv. tomato (strain ATCC BAA-871 / DC3000).